Here is a 149-residue protein sequence, read N- to C-terminus: Arginine repressor (149 aa).

The protein belongs to the ArgR family.

Its subcellular location is the cytoplasm. It participates in amino-acid biosynthesis; L-arginine biosynthesis [regulation]. In terms of biological role, regulates arginine biosynthesis genes. The polypeptide is Arginine repressor (Chlorobaculum parvum (strain DSM 263 / NCIMB 8327) (Chlorobium vibrioforme subsp. thiosulfatophilum)).